The following is a 1017-amino-acid chain: Putative calcium-transporting ATPase 13, plasma membrane-type (1017 aa).

Methionine 1 bears the N-acetylmethionine mark. At methionine 1–glycine 147 the chain is on the cytoplasmic side. The segment at leucine 20–asparagine 31 is interaction with calmodulin. Residues leucine 148–alanine 168 form a helical membrane-spanning segment. Residues threonine 169 to tyrosine 186 lie on the Lumenal side of the membrane. Residues aspartate 187–phenylalanine 207 form a helical membrane-spanning segment. Residues arginine 208–leucine 336 lie on the Cytoplasmic side of the membrane. A helical transmembrane segment spans residues aspartate 337 to leucine 356. Residues valine 357–methionine 393 lie on the Lumenal side of the membrane. Residues valine 394–leucine 411 traverse the membrane as a helical segment. At alanine 412–isoleucine 802 the chain is on the cytoplasmic side. The active-site 4-aspartylphosphate intermediate is aspartate 449. Mg(2+)-binding residues include aspartate 747 and aspartate 751. A helical transmembrane segment spans residues glutamine 803–phenylalanine 821. The Lumenal segment spans residues valine 822–leucine 832. The helical transmembrane segment at threonine 833–alanine 853 threads the bilayer. Over threonine 854 to leucine 873 the chain is Cytoplasmic. Residues isoleucine 874–leucine 896 traverse the membrane as a helical segment. At glutamine 897 to asparagine 905 the chain is on the lumenal side. A helical membrane pass occupies residues valine 906–asparagine 926. Topologically, residues glutamate 927–lysine 944 are cytoplasmic. Residues asparagine 945–leucine 966 traverse the membrane as a helical segment. Topologically, residues lysine 967–asparagine 976 are lumenal. The helical transmembrane segment at leucine 977–lysine 998 threads the bilayer. Topologically, residues serine 999–valine 1002 are cytoplasmic.

This sequence belongs to the cation transport ATPase (P-type) (TC 3.A.3) family. Type IIB subfamily.

The protein localises to the membrane. The catalysed reaction is Ca(2+)(in) + ATP + H2O = Ca(2+)(out) + ADP + phosphate + H(+). Its activity is regulated as follows. Activated by calmodulin. In terms of biological role, this magnesium-dependent enzyme catalyzes the hydrolysis of ATP coupled with the translocation of calcium from the cytosol out of the cell or into organelles. In Arabidopsis thaliana (Mouse-ear cress), this protein is Putative calcium-transporting ATPase 13, plasma membrane-type (ACA13).